Here is a 313-residue protein sequence, read N- to C-terminus: Probable cell division protein WhiA (313 aa).

Residues Ser274–Ala308 constitute a DNA-binding region (H-T-H motif).

Belongs to the WhiA family.

Involved in cell division and chromosome segregation. This Limosilactobacillus reuteri subsp. reuteri (strain JCM 1112) (Lactobacillus reuteri) protein is Probable cell division protein WhiA.